The chain runs to 37 residues: U12-myrmicitoxin-Mri1a (37 aa).

Residues 1–23 (MKTIELITIFAMITTLMVTVVAG) form the signal peptide. The propeptide occupies 24-25 (DP). Valine amide is present on Val-35.

In terms of tissue distribution, expressed by the venom gland.

It localises to the secreted. Toxin that induces mild paralysis, and reduces survival and reproduction when injected into aphids (A.pisum). May affect various processes in the aphid, including wound healing and hemolymph coagulation. It does not increase the sensitivity of the aphids to the chemical insecticides imidacloprid, methomyl and Spirotetramat. Has no insecticidal activity when injected into blowfly (L.caesar). Does not display any antibacterial or antifungal activity. This is U12-myrmicitoxin-Mri1a from Manica rubida (European giant red ant).